The primary structure comprises 112 residues: uncharacterized protein (112 aa).

Helical transmembrane passes span P7–Y26 and T36–Y58.

Its subcellular location is the membrane. This is an uncharacterized protein from Saccharomyces cerevisiae (strain ATCC 204508 / S288c) (Baker's yeast).